The chain runs to 251 residues: ATP synthase subunit a 2 (251 aa).

5 helical membrane-spanning segments follow: residues 35-55 (GQVF…SLLA), 94-114 (LPFI…GSLI), 133-153 (INTT…AGLS), 198-218 (LVVA…LMAL), and 219-239 (GLFT…AYIH).

This sequence belongs to the ATPase A chain family. F-type ATPases have 2 components, CF(1) - the catalytic core - and CF(0) - the membrane proton channel. CF(1) has five subunits: alpha(3), beta(3), gamma(1), delta(1), epsilon(1). CF(0) has four main subunits: a, b, b' and c.

The protein resides in the cellular thylakoid membrane. Key component of the proton channel; it plays a direct role in the translocation of protons across the membrane. This chain is ATP synthase subunit a 2, found in Crocosphaera subtropica (strain ATCC 51142 / BH68) (Cyanothece sp. (strain ATCC 51142)).